The sequence spans 499 residues: Patatin-like protein 6 (499 aa).

In terms of domain architecture, PNPLA spans 111-314; it reads LSIDSGGMRG…AMSNPTAAAI (204 aa). The short motif at 116-119 is the GGXR element; sequence GGMR. The Nucleophile role is filled by Ser155. Asp301 acts as the Proton acceptor in catalysis. Residues 301 to 303 carry the DGA/G motif; it reads DGG.

It belongs to the patatin family. Highly expressed in siliques and at lower levels in roots and flowers.

Functionally, possesses non-specific lipolytic acyl hydrolase (LAH) activity. Hydrolyzes phospholipids as well as galactolipids. May play a role in disease resistance. The chain is Patatin-like protein 6 (PLP6) from Arabidopsis thaliana (Mouse-ear cress).